The chain runs to 294 residues: Probable 2-(5''-triphosphoribosyl)-3'-dephosphocoenzyme-A synthase (294 aa).

The protein belongs to the CitG/MdcB family.

It catalyses the reaction 3'-dephospho-CoA + ATP = 2'-(5''-triphospho-alpha-D-ribosyl)-3'-dephospho-CoA + adenine. This is Probable 2-(5''-triphosphoribosyl)-3'-dephosphocoenzyme-A synthase from Streptococcus pyogenes serotype M3 (strain ATCC BAA-595 / MGAS315).